Consider the following 225-residue polypeptide: Isoprenyl transferase 1 (225 aa).

Aspartate 3 is a catalytic residue. Aspartate 3 contacts Mg(2+). Substrate-binding positions include 4–7, tryptophan 8, histidine 21, and 49–51; these read GNRR and SME. Residue asparagine 52 is the Proton acceptor of the active site. Substrate is bound by residues arginine 55, arginine 174, and 180-182; that span reads RLS. A Mg(2+)-binding site is contributed by glutamate 193.

It belongs to the UPP synthase family. Homodimer. Requires Mg(2+) as cofactor.

Catalyzes the condensation of isopentenyl diphosphate (IPP) with allylic pyrophosphates generating different type of terpenoids. The sequence is that of Isoprenyl transferase 1 from Corynebacterium glutamicum (strain ATCC 13032 / DSM 20300 / JCM 1318 / BCRC 11384 / CCUG 27702 / LMG 3730 / NBRC 12168 / NCIMB 10025 / NRRL B-2784 / 534).